Here is a 629-residue protein sequence, read N- to C-terminus: Probable potassium transport system protein Kup 3 (629 aa).

12 consecutive transmembrane segments (helical) span residues 20 to 40 (LSLS…LYTF), 54 to 74 (VTTI…IASV), 106 to 126 (PFII…GTIT), 143 to 163 (PSLK…LFAI), 171 to 191 (IGKA…ILGA), 212 to 232 (FLFS…LCVT), 253 to 273 (WFGL…ALVL), 291 to 311 (FLLP…QAII), 343 to 363 (IYIG…IIGF), 372 to 392 (AYGI…FIAL), 400 to 420 (IIKS…FFAA), and 425 to 445 (FING…MMYI).

Belongs to the HAK/KUP transporter (TC 2.A.72) family.

The protein localises to the cell inner membrane. The enzyme catalyses K(+)(in) + H(+)(in) = K(+)(out) + H(+)(out). Transport of potassium into the cell. Likely operates as a K(+):H(+) symporter. This chain is Probable potassium transport system protein Kup 3, found in Legionella pneumophila (strain Corby).